We begin with the raw amino-acid sequence, 173 residues long: Small ribosomal subunit protein uS9 (173 aa).

A disordered region spans residues 20-53 (SYTTESEVPVEGEYTSESVASRFGEPQPAAGLGR).

It belongs to the universal ribosomal protein uS9 family.

This is Small ribosomal subunit protein uS9 from Streptomyces avermitilis (strain ATCC 31267 / DSM 46492 / JCM 5070 / NBRC 14893 / NCIMB 12804 / NRRL 8165 / MA-4680).